Consider the following 788-residue polypeptide: E3 ubiquitin-protein ligase SspH2 (788 aa).

The tract at residues 1 to 481 (MPFHIGSGCL…PGYSGPIIRF (481 aa)) is interaction with host membrane and with target proteins. 12 LRR repeats span residues 223-242 (HITT…ALPP), 243-264 (ELRT…PPGL), 265-282 (LELS…ALPS), 283-302 (GLCK…VLPP), 303-324 (GLQE…PSEL), 325-342 (CKLW…MLPS), 343-364 (GLQE…PSEL), 365-382 (YKLW…ALPS), 383-404 (GLKE…PSEL), 405-422 (KELM…MLPS), 423-445 (GLLS…IHLS), and 446-466 (SETT…QALR). Positions 482–491 (DMAGASAPRE) are linker. Positions 492-788 (TRALHLAAAD…SYLNVQWRRN (297 aa)) are E3 ubiquitin-protein ligase catalytic domain. One can recognise an NEL domain in the interval 494 to 788 (ALHLAAADWL…SYLNVQWRRN (295 aa)). Catalysis depends on Cys-580, which acts as the Glycyl thioester intermediate.

It belongs to the LRR-containing bacterial E3 ligase family. In terms of processing, ubiquitinated in the presence of host E1 ubiquitin-activating enzyme UBA1, E2 ubiquitin-conjugating enzyme UBE2D2 and ubiquitin.

The protein localises to the secreted. The protein resides in the host cytoplasm. Its subcellular location is the host apical cell membrane. The catalysed reaction is S-ubiquitinyl-[E2 ubiquitin-conjugating enzyme]-L-cysteine + [acceptor protein]-L-lysine = [E2 ubiquitin-conjugating enzyme]-L-cysteine + N(6)-ubiquitinyl-[acceptor protein]-L-lysine.. Exists in an autoinhibited state in the absence of substrate protein, due to interactions of the leucine-rich repeat domain with the catalytic domain. Is activated upon binding to a substrate protein. Its function is as follows. Effector proteins function to alter host cell physiology and promote bacterial survival in host tissues. This protein is an E3 ubiquitin ligase that interferes with host's ubiquitination pathway. This chain is E3 ubiquitin-protein ligase SspH2 (sspH2), found in Salmonella typhimurium (strain LT2 / SGSC1412 / ATCC 700720).